The chain runs to 432 residues: Glutamyl-tRNA reductase (432 aa).

Substrate is bound by residues 49-52 (TCNR), Ser-109, 114-116 (EGQ), and Gln-120. Cys-50 functions as the Nucleophile in the catalytic mechanism. Residue 189–194 (GAGKMS) participates in NADP(+) binding.

It belongs to the glutamyl-tRNA reductase family. As to quaternary structure, homodimer.

The catalysed reaction is (S)-4-amino-5-oxopentanoate + tRNA(Glu) + NADP(+) = L-glutamyl-tRNA(Glu) + NADPH + H(+). The protein operates within porphyrin-containing compound metabolism; protoporphyrin-IX biosynthesis; 5-aminolevulinate from L-glutamyl-tRNA(Glu): step 1/2. It functions in the pathway porphyrin-containing compound metabolism; chlorophyll biosynthesis. Functionally, catalyzes the NADPH-dependent reduction of glutamyl-tRNA(Glu) to glutamate 1-semialdehyde (GSA). The chain is Glutamyl-tRNA reductase from Cyanothece sp. (strain PCC 7425 / ATCC 29141).